A 127-amino-acid chain; its full sequence is Secreted RxLR effector protein 3 (127 aa).

Positions 1–20 (MRPPLLLFLTVTVLVSCASA) are cleaved as a signal peptide. A RxLR-dEER motif is present at residues 30-48 (RSLRSIKTTTNDDAAEEER).

It belongs to the RxLR effector family.

The protein resides in the secreted. It is found in the host cell. In terms of biological role, secreted effector that partially suppresses elicitor-induced cell death in host and enhances virulence of P.parasitica. This chain is Secreted RxLR effector protein 3, found in Phytophthora nicotianae (Potato buckeye rot agent).